The following is an 83-amino-acid chain: RNA-binding protein Hfq (83 aa).

The Sm domain maps to Asp-9–Leu-68.

Belongs to the Hfq family. Homohexamer.

Functionally, RNA chaperone that binds small regulatory RNA (sRNAs) and mRNAs to facilitate mRNA translational regulation in response to envelope stress, environmental stress and changes in metabolite concentrations. Also binds with high specificity to tRNAs. This chain is RNA-binding protein Hfq, found in Pseudoalteromonas atlantica (strain T6c / ATCC BAA-1087).